A 20-amino-acid polypeptide reads, in one-letter code: Putative antimicrobial protein 2 (20 aa).

Residues 1–20 (DLPECCSATELELDSGKQTS) form a disordered region.

May have antimicrobial activity. This Cenchritis muricatus (Beaded periwinkle) protein is Putative antimicrobial protein 2.